We begin with the raw amino-acid sequence, 213 residues long: Thiamine-phosphate synthase (213 aa).

4-amino-2-methyl-5-(diphosphooxymethyl)pyrimidine contacts are provided by residues 38–42 (QLREK) and Asn-73. Mg(2+)-binding residues include Asp-74 and Asp-93. Residue Ser-111 participates in 4-amino-2-methyl-5-(diphosphooxymethyl)pyrimidine binding. 137-139 (TTS) contributes to the 2-[(2R,5Z)-2-carboxy-4-methylthiazol-5(2H)-ylidene]ethyl phosphate binding site. 4-amino-2-methyl-5-(diphosphooxymethyl)pyrimidine is bound at residue Lys-140. 2-[(2R,5Z)-2-carboxy-4-methylthiazol-5(2H)-ylidene]ethyl phosphate is bound by residues Gly-169 and 189 to 190 (IS).

This sequence belongs to the thiamine-phosphate synthase family. It depends on Mg(2+) as a cofactor.

The enzyme catalyses 2-[(2R,5Z)-2-carboxy-4-methylthiazol-5(2H)-ylidene]ethyl phosphate + 4-amino-2-methyl-5-(diphosphooxymethyl)pyrimidine + 2 H(+) = thiamine phosphate + CO2 + diphosphate. It carries out the reaction 2-(2-carboxy-4-methylthiazol-5-yl)ethyl phosphate + 4-amino-2-methyl-5-(diphosphooxymethyl)pyrimidine + 2 H(+) = thiamine phosphate + CO2 + diphosphate. The catalysed reaction is 4-methyl-5-(2-phosphooxyethyl)-thiazole + 4-amino-2-methyl-5-(diphosphooxymethyl)pyrimidine + H(+) = thiamine phosphate + diphosphate. It participates in cofactor biosynthesis; thiamine diphosphate biosynthesis; thiamine phosphate from 4-amino-2-methyl-5-diphosphomethylpyrimidine and 4-methyl-5-(2-phosphoethyl)-thiazole: step 1/1. Condenses 4-methyl-5-(beta-hydroxyethyl)thiazole monophosphate (THZ-P) and 2-methyl-4-amino-5-hydroxymethyl pyrimidine pyrophosphate (HMP-PP) to form thiamine monophosphate (TMP). This Lysinibacillus sphaericus (strain C3-41) protein is Thiamine-phosphate synthase.